The following is a 192-amino-acid chain: Protein A16 (192 aa).

The first 22 residues, 1–22 (MLLANTAAAVLLLIVCIGASVG), serve as a signal peptide directing secretion. The 116-residue stretch at 71–186 (KNKKFTIGTL…CLNPLNIFPY (116 aa)) folds into the C-type lectin domain. A disulfide bond links Cys-163 and Cys-177.

As to expression, expressed in the gut of adults.

This is Protein A16 (CTL3) from Anopheles gambiae (African malaria mosquito).